The primary structure comprises 103 residues: Cyclotide vibi-I (103 aa).

An N-terminal signal peptide occupies residues alanine 1–alanine 9. Residues serine 10–asparagine 69 constitute a propeptide that is removed on maturation. The segment at residues glycine 70 to asparagine 99 is a cross-link (cyclopeptide (Gly-Asn)). Cystine bridges form between cysteine 73-cysteine 89, cysteine 77-cysteine 91, and cysteine 82-cysteine 96. Residues serine 100–asparagine 103 constitute a propeptide that is removed on maturation.

In terms of processing, this is a cyclic peptide.

In terms of biological role, probably participates in a plant defense mechanism. The protein is Cyclotide vibi-I of Viola biflora (Yellow wood violet).